Reading from the N-terminus, the 127-residue chain is Aspartate 1-decarboxylase (127 aa).

Serine 25 acts as the Schiff-base intermediate with substrate; via pyruvic acid in catalysis. Serine 25 carries the pyruvic acid (Ser) modification. Threonine 57 serves as a coordination point for substrate. Catalysis depends on tyrosine 58, which acts as the Proton donor. Substrate is bound at residue glycine 73–alanine 75.

It belongs to the PanD family. As to quaternary structure, heterooctamer of four alpha and four beta subunits. Requires pyruvate as cofactor. In terms of processing, is synthesized initially as an inactive proenzyme, which is activated by self-cleavage at a specific serine bond to produce a beta-subunit with a hydroxyl group at its C-terminus and an alpha-subunit with a pyruvoyl group at its N-terminus.

Its subcellular location is the cytoplasm. It catalyses the reaction L-aspartate + H(+) = beta-alanine + CO2. It functions in the pathway cofactor biosynthesis; (R)-pantothenate biosynthesis; beta-alanine from L-aspartate: step 1/1. Functionally, catalyzes the pyruvoyl-dependent decarboxylation of aspartate to produce beta-alanine. This is Aspartate 1-decarboxylase from Clostridium botulinum (strain 657 / Type Ba4).